Consider the following 400-residue polypeptide: Acetylornithine aminotransferase (400 aa).

Residues 106–107 (GA) and F132 contribute to the pyridoxal 5'-phosphate site. Residue R135 participates in N(2)-acetyl-L-ornithine binding. Residue 217-220 (DEVQ) participates in pyridoxal 5'-phosphate binding. K246 is subject to N6-(pyridoxal phosphate)lysine. S274 contributes to the N(2)-acetyl-L-ornithine binding site. T275 contributes to the pyridoxal 5'-phosphate binding site.

Belongs to the class-III pyridoxal-phosphate-dependent aminotransferase family. ArgD subfamily. In terms of assembly, homodimer. Pyridoxal 5'-phosphate serves as cofactor.

It is found in the cytoplasm. The catalysed reaction is N(2)-acetyl-L-ornithine + 2-oxoglutarate = N-acetyl-L-glutamate 5-semialdehyde + L-glutamate. Its pathway is amino-acid biosynthesis; L-arginine biosynthesis; N(2)-acetyl-L-ornithine from L-glutamate: step 4/4. This Streptomyces clavuligerus protein is Acetylornithine aminotransferase.